Here is a 940-residue protein sequence, read N- to C-terminus: Translation initiation factor IF-2 (940 aa).

Disordered regions lie at residues 116 to 137 (PEQE…SSDT), 151 to 196 (EVEA…EQRS), 210 to 294 (AVRK…VKKV), and 318 to 346 (HSAP…VANR). The segment covering 121–137 (LESTSVAEIPESVSSDT) has biased composition (polar residues). The segment covering 159 to 180 (PEPEVEATPEPEVEDVVAEEAE) has biased composition (acidic residues). Low complexity predominate over residues 181–193 (PAAAEPAPAPVVE). A compositionally biased stretch (basic and acidic residues) spans 213-239 (KKAEEEAEVARRKADAEKAEAAAKQKA). Residues 282–294 (KHNKKAGKAVKKV) show a composition bias toward basic residues. Positions 326 to 337 (GGQNNNSSNSGS) are enriched in low complexity. Residues 441 to 610 (ARAPVVTVMG…ALQAELLELS (170 aa)) form the tr-type G domain. The tract at residues 450–457 (GHVDHGKT) is G1. 450–457 (GHVDHGKT) is a GTP binding site. The interval 475 to 479 (GITQH) is G2. A G3 region spans residues 496–499 (DTPG). GTP-binding positions include 496–500 (DTPGH) and 550–553 (NKID). The interval 550 to 553 (NKID) is G4. The segment at 586–588 (SAQ) is G5.

This sequence belongs to the TRAFAC class translation factor GTPase superfamily. Classic translation factor GTPase family. IF-2 subfamily.

It localises to the cytoplasm. Its function is as follows. One of the essential components for the initiation of protein synthesis. Protects formylmethionyl-tRNA from spontaneous hydrolysis and promotes its binding to the 30S ribosomal subunits. Also involved in the hydrolysis of GTP during the formation of the 70S ribosomal complex. This Teredinibacter turnerae (strain ATCC 39867 / T7901) protein is Translation initiation factor IF-2.